We begin with the raw amino-acid sequence, 309 residues long: NAD kinase (309 aa).

The Proton acceptor role is filled by aspartate 89. NAD(+)-binding positions include 89–90 (DG), 163–164 (NE), histidine 174, arginine 191, aspartate 193, and 204–209 (TAYALS).

Belongs to the NAD kinase family. It depends on a divalent metal cation as a cofactor.

Its subcellular location is the cytoplasm. The catalysed reaction is NAD(+) + ATP = ADP + NADP(+) + H(+). Its function is as follows. Involved in the regulation of the intracellular balance of NAD and NADP, and is a key enzyme in the biosynthesis of NADP. Catalyzes specifically the phosphorylation on 2'-hydroxyl of the adenosine moiety of NAD to yield NADP. The protein is NAD kinase of Shewanella sp. (strain ANA-3).